The sequence spans 228 residues: E3 ubiquitin-protein ligase RNF114 (228 aa).

The RING-type zinc-finger motif lies at 29-68 (CPVCLEVYEKPVQVPCGHVFCSACLQECLKPKKPVCGVCR). 2 residues coordinate Zn(2+): Cys91 and Cys94. The C2HC RNF-type zinc-finger motif lies at 91–110 (CHGCRKKFFLSKIRSHVATC). Residue Lys102 is modified to N6-acetyllysine. Zn(2+)-binding residues include His106 and Cys110. Lys112 carries the post-translational modification N6-acetyllysine.

In terms of assembly, interacts with XAF1, the interaction increases XAF1 stability and proapoptotic effects, and may regulate IFN signaling. Post-translationally, autoubiquitinated. Polyubiquitinated in the presence of E2 enzymes UBE2D1, UBE2D2 and UBE2D3, but only monoubiquitinated in the presence of UBE2E1.

The protein localises to the cytoplasm. It is found in the nucleus. The catalysed reaction is S-ubiquitinyl-[E2 ubiquitin-conjugating enzyme]-L-cysteine + [acceptor protein]-L-lysine = [E2 ubiquitin-conjugating enzyme]-L-cysteine + N(6)-ubiquitinyl-[acceptor protein]-L-lysine.. It participates in protein modification; protein ubiquitination. Functionally, E3 ubiquitin-protein ligase that promotes the ubiquitination of various substrates. In turn, participates in the regulation of many biological processes including cell cycle, apoptosis, osteoclastogenesis as well as innate or adaptive immunity. Acts as negative regulator of NF-kappa-B-dependent transcription by promoting the ubiquitination and stabilization of the NF-kappa-B inhibitor TNFAIP3. May promote the ubiquitination of TRAF6 as well. Also acts as a negative regulator of T-cell activation. Inhibits cellular dsRNA responses and interferon production by targeting MAVS component for proteasomal degradation. Ubiquitinates the CDK inhibitor CDKN1A leading to its degradationand probably also CDKN1B and CDKN1C. This activity stimulates cell cycle G1-to-S phase transition and suppresses cellular senescence. May play a role in spermatogenesis. This Pan troglodytes (Chimpanzee) protein is E3 ubiquitin-protein ligase RNF114 (RNF114).